Here is a 156-residue protein sequence, read N- to C-terminus: Small ribosomal subunit protein uS7 (156 aa).

It belongs to the universal ribosomal protein uS7 family. As to quaternary structure, part of the 30S ribosomal subunit. Contacts proteins S9 and S11.

One of the primary rRNA binding proteins, it binds directly to 16S rRNA where it nucleates assembly of the head domain of the 30S subunit. Is located at the subunit interface close to the decoding center, probably blocks exit of the E-site tRNA. This Bacillus velezensis (strain DSM 23117 / BGSC 10A6 / LMG 26770 / FZB42) (Bacillus amyloliquefaciens subsp. plantarum) protein is Small ribosomal subunit protein uS7.